We begin with the raw amino-acid sequence, 56 residues long: Genome polyprotein (56 aa).

A disordered region spans residues 1-30; sequence ETMLDRIASGDLESSVDDPRSAEDKRFESH. Basic and acidic residues predominate over residues 17–30; the sequence is DDPRSAEDKRFESH.

The protein belongs to the picornaviridae polyprotein family. As to quaternary structure, homopentamer. Homooligomer. Interacts with capsid protein VP2. Interacts with capsid protein VP3. In terms of processing, specific enzymatic cleavages by viral protease in vivo yield a variety of precursors and mature proteins. Polyprotein processing intermediates are produced, such as P1-2A which is a functional precursor of the structural proteins, VP0 which is a VP4-VP2 precursor, VP1-2A precursor, 3ABC precursor which is a stable and catalytically active precursor of 3A, 3B and 3C proteins, 3AB and 3CD precursors. The assembly signal 2A is removed from VP1-2A by a host protease, possibly host Cathepsin L. This cleavage occurs over a region of 3 amino-acids probably generating VP1 proteins with heterogeneous C-termini. Post-translationally, the assembly signal 2A is removed from VP1-2A by a host protease, possibly host Cathepsin L in naked virions. This cleavage does not occur in enveloped virions. This cleavage occurs over a region of 3 amino-acids probably generating VP1 proteins with heterogeneous C-termini.

The protein localises to the virion. The protein resides in the host endosome. Its subcellular location is the host multivesicular body. In terms of biological role, capsid proteins VP1, VP2, and VP3 form a closed capsid enclosing the viral positive strand RNA genome. All these proteins contain a beta-sheet structure called beta-barrel jelly roll. Together they form an icosahedral capsid (T=3) composed of 60 copies of each VP1, VP2, and VP3, with a diameter of approximately 300 Angstroms. VP1 is situated at the 12 fivefold axes, whereas VP2 and VP3 are located at the quasi-sixfold axes. The naked capsid interacts with the host receptor HAVCR1 to provide virion attachment to and probably entry into the target cell. Precursor component of immature procapsids that corresponds to an extended form of the structural protein VP1. After maturation, possibly by the host Cathepsin L, the assembly signal 2A is cleaved to give rise to the mature VP1 protein. In Callithrix (Owl-faced monkey), this protein is Genome polyprotein.